Here is a 116-residue protein sequence, read N- to C-terminus: Large ribosomal subunit protein bL19 (116 aa).

It belongs to the bacterial ribosomal protein bL19 family.

In terms of biological role, this protein is located at the 30S-50S ribosomal subunit interface and may play a role in the structure and function of the aminoacyl-tRNA binding site. The chain is Large ribosomal subunit protein bL19 from Haemophilus ducreyi (strain 35000HP / ATCC 700724).